Reading from the N-terminus, the 494-residue chain is Hexokinase-2 (494 aa).

Positions 32 to 483 (GRADAVLREL…SGIGAALLAA (452 aa)) constitute a Hexokinase domain. Residues 87-225 (SGEEKGVFYA…GLDMKVTALI (139 aa)) form a hexokinase small subdomain region. ADP contacts are provided by G101, T102, and N103. T191, K192, N226, and D227 together coordinate D-glucose. The tract at residues 226-472 (NDTIGTLAGG…STIVIKLAKD (247 aa)) is hexokinase large subdomain. Residue T250 participates in ADP binding. N253, E281, and E312 together coordinate D-glucose. G437 contributes to the ADP binding site.

Belongs to the hexokinase family. As to expression, expressed in roots, leaves, flowers, immature seeds, endosperm and seed coat.

The enzyme catalyses a D-hexose + ATP = a D-hexose 6-phosphate + ADP + H(+). It catalyses the reaction D-fructose + ATP = D-fructose 6-phosphate + ADP + H(+). It carries out the reaction D-glucose + ATP = D-glucose 6-phosphate + ADP + H(+). It participates in carbohydrate metabolism; hexose metabolism. Its pathway is carbohydrate degradation; glycolysis; D-glyceraldehyde 3-phosphate and glycerone phosphate from D-glucose: step 1/4. Its function is as follows. Fructose and glucose phosphorylating enzyme. The protein is Hexokinase-2 (HXK2) of Oryza sativa subsp. japonica (Rice).